The primary structure comprises 1298 residues: Activating molecule in BECN1-regulated autophagy protein 1 (1298 aa).

The interaction with DDB1 stretch occupies residues methionine 1–alanine 22. Lysine 45 is covalently cross-linked (Glycyl lysine isopeptide (Lys-Gly) (interchain with G-Cter in ubiquitin)). WD repeat units lie at residues aspartate 51–serine 90, glycine 93–phenylalanine 133, and aspartate 135–lysine 175. Serine 52 carries the phosphoserine; by MTOR modification. Over residues isoleucine 254 to alanine 266 the composition is skewed to polar residues. The interval isoleucine 254–threonine 284 is disordered. The span at proline 268–proline 277 shows a compositional bias: pro residues. Residues proline 275–arginine 281 carry the PxP motif 1 motif. At serine 328 the chain carries Phosphoserine. Residues phenylalanine 343–glycine 413 are disordered. The span at glutamine 354–asparagine 385 shows a compositional bias: polar residues. Residues serine 394 and serine 443 each carry the phosphoserine modification. 3 stretches are compositionally biased toward polar residues: residues serine 458–threonine 467, histidine 547–serine 561, and asparagine 590–glutamine 601. 4 disordered regions span residues serine 458–serine 494, isoleucine 538–serine 561, asparagine 590–arginine 690, and arginine 747–methionine 796. Composition is skewed to low complexity over residues valine 602–serine 614 and serine 628–serine 639. A phosphoserine mark is found at serine 635 and serine 639. Over residues tyrosine 661–alanine 674 the composition is skewed to polar residues. Position 747 is an asymmetric dimethylarginine (arginine 747). The segment covering threonine 772–aspartate 781 has biased composition (acidic residues). A Phosphoserine; by IKKA modification is found at serine 1043. The LIR signature appears at serine 1043–leucine 1052. The span at histidine 1060–threonine 1075 shows a compositional bias: polar residues. The tract at residues histidine 1060–aspartate 1079 is disordered. Short sequence motifs (TQT motif) lie at residues threonine 1104–threonine 1106 and threonine 1116–threonine 1118. 3 disordered regions span residues glutamine 1112–serine 1143, arginine 1190–leucine 1214, and serine 1227–arginine 1298. Positions serine 1191–arginine 1212 are enriched in polar residues. A Phosphoserine modification is found at serine 1205. The PxP motif 2 signature appears at proline 1206–arginine 1212.

The protein belongs to the WD repeat AMBRA1 family. As to quaternary structure, component of the DCX(AMBRA1) E3 ubiquitin ligase complex, also named CRL4(AMBRA1), at least composed of CUL4 (CUL4A or CUL4B), DDB1, AMBRA1 and RBX1. Interacts with BECN1. Probably forms a complex with BECN1 and PIK3C3. Interacts with BECN2. Interacts with BCL2; leading to prevent interaction with BCN1 and autophagy, interaction is disrupted upon autophagy induction. Interacts with ULK1. Interacts (via PxP motifs) with PPP2CA; enhancing interaction between PPP2CA and MYC or FOXO3. Forms a complex with PPP2CA and BECN1; AMBRA1 and BECN1 components of the complex regulate MYC stability via different pathways. Interacts (TQT motifs) with DYNLL1 and DYNLL2; tethering AMBRA1 and the BECN1-PIK3C3 complex in absence of autophagy. Interacts with TRAF6; interaction is required to mediate 'Lys-63'-linked ubiquitination of ULK1. Interacts with TRIM32; promoting activation of ULK1 by TRIM32 via unanchored 'Lys-63'-linked polyubiquitin chains. Interacts with PRKN. Interacts (via LIR motif) with LC3 (MAP1LC3A, MAP1LC3B or MAP1LC3C). Interacts with HUWE1. Interacts with PTK2/FAK. Interacts with SRC; required for SRC trafficking to autophagosomes. Post-translationally, phosphorylation at Ser-52 by MTOR inhibits its ability to regulate autophagy and mediate ubiquitination of ULK1. Phosphorylation by ULK1 in response to autophagy induction abolishes interaction with DYNLL1 and DYNLL2, releasing AMBRA1 from the cytoskeletal docking site to induce autophagosome nucleation. Phosphorylation by MTOR inhibits interaction with PPP2CA and subsequent dephosphorylation of MYC. Phosphorylation at Ser-1043 by CHUK/IKKA promotes its interaction with ATG8 family proteins GABARAP and MAP1LC3B and its mitophagic activity. Ubiquitinated by RNF2 via 'Lys-48'-linkage in unstressed cells, leading to its degradation by the proteasome. Induction of autophagy promotes stabilization via interaction with CUL4 (CUL4A or CUL4B) and DDB1. Upon prolonged starvation, ubiquitinated and degraded, terminating the autophagy response. In terms of processing, undergoes proteolytic processing by caspase-6 (CASP6), caspase-7 (CASP7) and caspase-8 (CASP8) during apoptosis, resulting in the dismantling of the autophagic machinery and the accomplishment of the programmed cell death program. Also cleaved by calpains during apoptosis, which mediate a complete proteolytic degradation.

The protein resides in the endoplasmic reticulum. Its subcellular location is the cytoplasm. The protein localises to the cytoskeleton. It is found in the cytoplasmic vesicle. It localises to the autophagosome. The protein resides in the mitochondrion. Its subcellular location is the cytosol. The protein localises to the nucleus. It is found in the cell junction. It localises to the focal adhesion. The protein operates within protein modification; protein ubiquitination. Its function is as follows. Substrate-recognition component of a DCX (DDB1-CUL4-X-box) E3 ubiquitin-protein ligase complex involved in cell cycle control and autophagy. The DCX(AMBRA1) complex specifically mediates the polyubiquitination of target proteins such as BECN1, CCND1, CCND2, CCND3, ELOC and ULK1. Acts as an upstream master regulator of the transition from G1 to S cell phase: AMBRA1 specifically recognizes and binds phosphorylated cyclin-D (CCND1, CCND2 and CCND3), leading to cyclin-D ubiquitination by the DCX(AMBRA1) complex and subsequent degradation. By controlling the transition from G1 to S phase and cyclin-D degradation, AMBRA1 acts as a tumor suppressor that promotes genomic integrity during DNA replication and counteracts developmental abnormalities and tumor growth. AMBRA1 also regulates the cell cycle by promoting MYC dephosphorylation and degradation independently of the DCX(AMBRA1) complex: acts via interaction with the catalytic subunit of protein phosphatase 2A (PPP2CA), which enhances interaction between PPP2CA and MYC, leading to MYC dephosphorylation and degradation. Acts as a regulator of Cul5-RING (CRL5) E3 ubiquitin-protein ligase complexes by mediating ubiquitination and degradation of Elongin-C (ELOC) component of CRL5 complexes. Acts as a key regulator of autophagy by modulating the BECN1-PIK3C3 complex: controls protein turnover during neuronal development, and regulates normal cell survival and proliferation. In normal conditions, AMBRA1 is tethered to the cytoskeleton via interaction with dyneins DYNLL1 and DYNLL2. Upon autophagy induction, AMBRA1 is released from the cytoskeletal docking site to induce autophagosome nucleation by mediating ubiquitination of proteins involved in autophagy. The DCX(AMBRA1) complex mediates 'Lys-63'-linked ubiquitination of BECN1, increasing the association between BECN1 and PIK3C3 to promote PIK3C3 activity. In collaboration with TRAF6, AMBRA1 mediates 'Lys-63'-linked ubiquitination of ULK1 following autophagy induction, promoting ULK1 stability and kinase activity. Also activates ULK1 via interaction with TRIM32: TRIM32 stimulates ULK1 through unanchored 'Lys-63'-linked polyubiquitin chains. Also acts as an activator of mitophagy via interaction with PRKN and LC3 proteins (MAP1LC3A, MAP1LC3B or MAP1LC3C); possibly by bringing damaged mitochondria onto autophagosomes. Also activates mitophagy by acting as a cofactor for HUWE1; acts by promoting HUWE1-mediated ubiquitination of MFN2. AMBRA1 is also involved in regulatory T-cells (Treg) differentiation by promoting FOXO3 dephosphorylation independently of the DCX(AMBRA1) complex: acts via interaction with PPP2CA, which enhances interaction between PPP2CA and FOXO3, leading to FOXO3 dephosphorylation and stabilization. May act as a regulator of intracellular trafficking, regulating the localization of active PTK2/FAK and SRC. Also involved in transcription regulation by acting as a scaffold for protein complexes at chromatin. In Homo sapiens (Human), this protein is Activating molecule in BECN1-regulated autophagy protein 1.